A 228-amino-acid polypeptide reads, in one-letter code: Probable GTP-binding protein EngB (228 aa).

An EngB-type G domain is found at 48-222 (YGLEVAFVGY…QFVLNNWFSS (175 aa)). Residues 56–63 (GYSNSGKS), 83–87 (GRTRL), 101–104 (DFPG), 168–171 (NKMD), and 201–203 (FSS) each bind GTP. Residues Ser63 and Thr85 each contribute to the Mg(2+) site.

This sequence belongs to the TRAFAC class TrmE-Era-EngA-EngB-Septin-like GTPase superfamily. EngB GTPase family. Mg(2+) serves as cofactor.

Its function is as follows. Necessary for normal cell division and for the maintenance of normal septation. In Buchnera aphidicola subsp. Baizongia pistaciae (strain Bp), this protein is Probable GTP-binding protein EngB.